Reading from the N-terminus, the 771-residue chain is Polyribonucleotide nucleotidyltransferase (771 aa).

Mg(2+)-binding residues include Asp487 and Asp493. One can recognise a KH domain in the interval Pro554–Ile613. The S1 motif domain occupies Gly623 to Arg691. The segment at Glu696 to Asp771 is disordered. The segment covering Glu702–Asp771 has biased composition (basic and acidic residues).

This sequence belongs to the polyribonucleotide nucleotidyltransferase family. It depends on Mg(2+) as a cofactor.

It is found in the cytoplasm. It catalyses the reaction RNA(n+1) + phosphate = RNA(n) + a ribonucleoside 5'-diphosphate. Its function is as follows. Involved in mRNA degradation. Catalyzes the phosphorolysis of single-stranded polyribonucleotides processively in the 3'- to 5'-direction. This is Polyribonucleotide nucleotidyltransferase from Sphingopyxis alaskensis (strain DSM 13593 / LMG 18877 / RB2256) (Sphingomonas alaskensis).